The following is a 530-amino-acid chain: TNF receptor-associated factor 6 (530 aa).

An interaction with TAX1BP1 region spans residues 1–362; that stretch reads MSLLNCENSC…EAQQCNGIYI (362 aa). The RING-type zinc finger occupies 70–109; it reads CPICLMALREAVQTPCGHRFCKACIIKSIRDAGHKCPVDN. Lys124 participates in a covalent cross-link: Glycyl lysine isopeptide (Lys-Gly) (interchain with G-Cter in SUMO); alternate. Lys124 is covalently cross-linked (Glycyl lysine isopeptide (Lys-Gly) (interchain with G-Cter in ubiquitin); alternate). A Glycyl lysine isopeptide (Lys-Gly) (interchain with G-Cter in SUMO) cross-link involves residue Lys142. TRAF-type zinc fingers lie at residues 150-202 and 203-259; these read DHQV…EEKE and IHDQ…NHLA. Residues 299–356 adopt a coiled-coil conformation; the sequence is EDPNYEETIKQLESRLVRQDHQIRELTAKMETQSMYVGELKRTIRTLEDKVAEMEAQQ. A Glycyl lysine isopeptide (Lys-Gly) (interchain with G-Cter in ubiquitin) cross-link involves residue Lys327. In terms of domain architecture, MATH spans 358-507; that stretch reads NGIYIWKIGN…DDTLLVRCEV (150 aa). Residues 363-530 form an interaction with TANK region; sequence WKIGNFGMHL…FQPRSTDAGV (168 aa). Lys461 is covalently cross-linked (Glycyl lysine isopeptide (Lys-Gly) (interchain with G-Cter in SUMO)).

It belongs to the TNF receptor-associated factor family. A subfamily. Homotrimer. Homooligomer. N-terminal region is dimeric while C-terminal region is trimeric; maybe providing a mode of oligomerization. Upon IL1B treatment, forms a complex with PELI1, IRAK1, IRAK4 and MYD88; this complex recruits MAP3K7/TAK1, TAB1 and TAB2 to mediate NF-kappa-B activation. Direct binding of SMAD6 to PELI1 prevents the complex formation and hence negatively regulates IL1R-TLR signaling and eventually NF-kappa-B-mediated gene expression. Binds to TNFRSF5/CD40 and TNFRSF11A/RANK. Associates with NGFR, TNFRSF17, IRAK2, IRAK3, PELI2, PELI3, RIPK2, MAP3K1, MAP3K5, MAP3K14, CSK, TRAF, TRAF-interacting protein TRIP and TNF receptor associated protein TDP2. Binds UBE2V1. Interacts with MAVS/IPS1. Interacts with TAX1BP1; this interaction mediates deubiquitination of TRAF6 and inhibition of NF-kappa-B activation. Interacts with IL17R. Interacts with SQSTM1 bridging NTRK1 and NGFR. Forms a ternary complex with SQSTM1 and PRKCZ. Interacts with IL1RL1. Interacts with AJUBA. Interacts with TRAFD1. Interacts with TICAM2. Interacts with ZFAND5. Interacts with ARRB1 and ARRB2. Interacts with MAP3K7 and TAB1/MAP3K7IP1; during IL-1 signaling. Interacts with UBE2N. Interacts with TGFBR1, HDAC1 and RANGAP1. Interacts with AKT1, AKT2 and AKT3. Interacts (via TRAF domains) with NUMBL (via C-terminal). Interacts (via TRAF domains) with DYNC2I2 (via WD domains). Interacts with RBCK1. Interacts with LIMD1 (via LIM domains). Interacts with RSAD2/viperin. Interacts with IFIT3 (via N-terminus). Interacts (via C-terminus) with EIF2AK2/PKR (via the kinase catalytic domain). Interacts with CARD14. Interacts with CD40 and MAP3K8; the interaction is required for ERK activation. Interacts with TICAM1 and this interaction is enhanced in the presence of WDFY1. Interacts with TANK; this interaction increases in response to DNA damage. Interacts with USP10; this interaction increases in response to DNA damage. Interacts with ZC3H12A; this interaction increases in response to DNA damage and is stimulated by TANK. Interacts with WDFY3. Interacts with TRIM13. Interacts with GPS2. Interacts (via C-terminus) with SASH1. Interacts with LRRC19. Interacts with IL17RA and TRAF3IP2. Interacts with TOMM70. Interacts with AMBRA1; interaction is required to mediate 'Lys-63'-linked ubiquitination of ULK1. Interacts with CRBN; this interaction inhibits TLR4-mediated signaling by preventing TRAF6-mediated ubiquitination of ECSIT. As to quaternary structure, (Microbial infection) Interacts (via N-terminal RING domain) with Toxoplasma gondii GRA7; the interaction plays a role in GRA7-induced pro-inflammatory cytokine production in mouse macrophages. Post-translationally, sumoylated on Lys-124, Lys-142 and Lys-461 with SUMO1. In terms of processing, polyubiquitinated on Lys-124 by TRAF3IP2; after cell stimulation with IL17A. Polyubiquitinated; after cell stimulation with IL1B or TGFB. This ligand-induced cell stimulation leads to dimerization/oligomerization of TRAF6 molecules, followed by auto-ubiquitination which involves UBE2N and UBE2V1 and leads to TRAF6 activation. This 'Lys-63' site-specific poly-ubiquitination appears to be associated with the activation of signaling molecules. Endogenous autoubiquitination occurs only for the cytoplasmic form. Deubiquitinated by USP10 in a TANK-dependent manner, leading to the negative regulation of NF-kappa-B signaling upon DNA damage. LRRC19 induces 'Lys-63' ubiquitination. Ubiquitinated at Lys-327 by the SCF(FBXL2) complex, leading to its degradation by the proteasome. Highly expressed in brain, lung, liver, skeletal muscle, and kidney; lower expression in heart, spleen, and testis.

Its subcellular location is the cytoplasm. It localises to the cell cortex. The protein resides in the nucleus. It is found in the lipid droplet. It carries out the reaction S-ubiquitinyl-[E2 ubiquitin-conjugating enzyme]-L-cysteine + [acceptor protein]-L-lysine = [E2 ubiquitin-conjugating enzyme]-L-cysteine + N(6)-ubiquitinyl-[acceptor protein]-L-lysine.. It functions in the pathway protein modification; protein ubiquitination. Its function is as follows. E3 ubiquitin ligase that, together with UBE2N and UBE2V1, mediates the synthesis of 'Lys-63'-linked-polyubiquitin chains conjugated to proteins, such as ECSIT, IKBKG, IRAK1, AKT1 and AKT2. Also mediates ubiquitination of free/unanchored polyubiquitin chain that leads to MAP3K7 activation. Leads to the activation of NF-kappa-B and JUN. Seems to also play a role in dendritic cells (DCs) maturation and/or activation. Represses c-Myb-mediated transactivation, in B-lymphocytes. Adapter protein that seems to play a role in signal transduction initiated via TNF receptor, IL-1 receptor and IL-17 receptor. Regulates osteoclast differentiation by mediating the activation of adapter protein complex 1 (AP-1) and NF-kappa-B, in response to RANK-L stimulation. Together with MAP3K8, mediates CD40 signals that activate ERK in B-cells and macrophages, and thus may play a role in the regulation of immunoglobulin production. Acts as a regulator of the JNK and NF-kappa-B signaling pathways by initiating assembly of heterotypic 'Lys-63'-/'Lys-48'-linked branched ubiquitin chains that are then recognized by TAB2: TRAF6 catalyzes initial 'Lys-63'-linked-polyubiquitin chains that are then branched via 'Lys-48'-linked polyubiquitin by HUWE1. 'Lys-63'-/'Lys-48'-linked branched ubiquitin chains protect 'Lys-63'-linkages from CYLD deubiquitination. Also participates in the TCR signaling by ubiquitinating LAT. This is TNF receptor-associated factor 6 (Traf6) from Mus musculus (Mouse).